The chain runs to 210 residues: Thymidylate kinase (210 aa).

ATP is bound at residue 11–18 (GLEGAGKS).

This sequence belongs to the thymidylate kinase family.

It carries out the reaction dTMP + ATP = dTDP + ADP. Phosphorylation of dTMP to form dTDP in both de novo and salvage pathways of dTTP synthesis. The sequence is that of Thymidylate kinase from Vibrio campbellii (strain ATCC BAA-1116).